A 158-amino-acid chain; its full sequence is 6,7-dimethyl-8-ribityllumazine synthase (158 aa).

Residues phenylalanine 24, alanine 58–glutamate 60, and alanine 82–isoleucine 84 each bind 5-amino-6-(D-ribitylamino)uracil. Glycine 87–threonine 88 contributes to the (2S)-2-hydroxy-3-oxobutyl phosphate binding site. Catalysis depends on histidine 90, which acts as the Proton donor. Phenylalanine 115 is a binding site for 5-amino-6-(D-ribitylamino)uracil. A (2S)-2-hydroxy-3-oxobutyl phosphate-binding site is contributed by arginine 129.

This sequence belongs to the DMRL synthase family. As to quaternary structure, forms an icosahedral capsid composed of 60 subunits, arranged as a dodecamer of pentamers.

It carries out the reaction (2S)-2-hydroxy-3-oxobutyl phosphate + 5-amino-6-(D-ribitylamino)uracil = 6,7-dimethyl-8-(1-D-ribityl)lumazine + phosphate + 2 H2O + H(+). It participates in cofactor biosynthesis; riboflavin biosynthesis; riboflavin from 2-hydroxy-3-oxobutyl phosphate and 5-amino-6-(D-ribitylamino)uracil: step 1/2. Its function is as follows. Catalyzes the formation of 6,7-dimethyl-8-ribityllumazine by condensation of 5-amino-6-(D-ribitylamino)uracil with 3,4-dihydroxy-2-butanone 4-phosphate. This is the penultimate step in the biosynthesis of riboflavin. The protein is 6,7-dimethyl-8-ribityllumazine synthase of Pseudomonas paraeruginosa (strain DSM 24068 / PA7) (Pseudomonas aeruginosa (strain PA7)).